Reading from the N-terminus, the 259-residue chain is MSVLAVIPARYGSTRFPGKPLAMIAGQMMIERVWRIAAAVPGVDRVVVATDDQRIMDAVAAAGGEAVMTDPDCRNGTERALDAVKRLNSDADIVINVQGDAPLIPPWVIGGVAETLRADPSLQMATPAIALPPETEARMRADKANGSASGTTVVFNKAMDAMYFSKNVIPFRRKPDEGAPTYQHIGLYGYRRDTLEGLVALEPTPFELTESLEQLRALENGIPIRVVLTDYRGRSAWSVDAPEDAVRVEGIIAAEGELV.

Belongs to the KdsB family.

The protein resides in the cytoplasm. The catalysed reaction is 3-deoxy-alpha-D-manno-oct-2-ulosonate + CTP = CMP-3-deoxy-beta-D-manno-octulosonate + diphosphate. It functions in the pathway nucleotide-sugar biosynthesis; CMP-3-deoxy-D-manno-octulosonate biosynthesis; CMP-3-deoxy-D-manno-octulosonate from 3-deoxy-D-manno-octulosonate and CTP: step 1/1. The protein operates within bacterial outer membrane biogenesis; lipopolysaccharide biosynthesis. In terms of biological role, activates KDO (a required 8-carbon sugar) for incorporation into bacterial lipopolysaccharide in Gram-negative bacteria. This chain is 3-deoxy-manno-octulosonate cytidylyltransferase, found in Maricaulis maris (strain MCS10) (Caulobacter maris).